Consider the following 394-residue polypeptide: L-lactate dehydrogenase (394 aa).

Positions 1 to 380 (MIISAASDYR…SRDSLVQNAE (380 aa)) constitute an FMN hydroxy acid dehydrogenase domain. Residue tyrosine 24 coordinates substrate. FMN is bound by residues serine 106 and glutamine 127. Tyrosine 129 contributes to the substrate binding site. Threonine 155 serves as a coordination point for FMN. Substrate is bound at residue arginine 164. Lysine 251 contacts FMN. The Proton acceptor role is filled by histidine 275. Arginine 278 is a substrate binding site. Residue 306 to 330 (DSGIRNGLDVVRMIALGADSVLLGR) coordinates FMN.

Belongs to the FMN-dependent alpha-hydroxy acid dehydrogenase family. FMN is required as a cofactor.

It localises to the cell inner membrane. It catalyses the reaction (S)-lactate + A = pyruvate + AH2. In terms of biological role, catalyzes the conversion of L-lactate to pyruvate. Is coupled to the respiratory chain. The chain is L-lactate dehydrogenase from Klebsiella pneumoniae (strain 342).